A 121-amino-acid chain; its full sequence is Small ribosomal subunit protein uS13 (121 aa).

Residues 97–121 (VRGQRTRTNARTRRGARKTVAGRKK) are disordered. Positions 100-121 (QRTRTNARTRRGARKTVAGRKK) are enriched in basic residues.

Belongs to the universal ribosomal protein uS13 family. In terms of assembly, part of the 30S ribosomal subunit. Forms a loose heterodimer with protein S19. Forms two bridges to the 50S subunit in the 70S ribosome.

Functionally, located at the top of the head of the 30S subunit, it contacts several helices of the 16S rRNA. In the 70S ribosome it contacts the 23S rRNA (bridge B1a) and protein L5 of the 50S subunit (bridge B1b), connecting the 2 subunits; these bridges are implicated in subunit movement. Contacts the tRNAs in the A and P-sites. The protein is Small ribosomal subunit protein uS13 of Prochlorococcus marinus (strain NATL2A).